We begin with the raw amino-acid sequence, 152 residues long: Proteolipid protein 2 (152 aa).

The MARVEL domain maps to 19–138; the sequence is FSRTKKGILL…DAYITFPLKQ (120 aa). Helical transmembrane passes span 25-45, 48-68, 85-105, and 112-132; these read GILL…FSAS, SAYS…LVFY, DFFR…VVLV, and RVVA…DAYI.

It is found in the membrane. In terms of biological role, may play a role in cell differentiation in the intestinal epithelium. The sequence is that of Proteolipid protein 2 (Plp2) from Mus musculus (Mouse).